Reading from the N-terminus, the 337-residue chain is MKTLGEFIVEKQLDFSHATGELTALLSAIKLGAKIIHRDINKAGLVDILGASGVSNIQGEDQMKLDLFANEKLKAALKARGEVAGIASEEEDDIVIFDGGRAENAKYVVLMDPLDGSSNIDVNVSVGTIFSIYRRITPFGTPITEEDFLQPGTKQVTAGYVVYGSSTMLVYTTGYGVHAFTYDPSLGVFCLSHEKVRYPATGCMYSINEGNYIKFPLGVKKYIKYCQEQDEATKRPYTSRYIGSLVADFHRNLLKGGIYIYPSTASHPQGKLRLLYECNPMAFLAEQAGGKATDGVNRILDIVPEKLHQRAPFFVGTKSMVEDAEGFIAKFPDEEAK.

The Mg(2+) site is built by Glu89, Asp112, Leu114, and Asp115. Substrate-binding positions include 115–118 (DGSS), Asn208, Tyr241, and Lys271. Glu277 provides a ligand contact to Mg(2+).

This sequence belongs to the FBPase class 1 family. In terms of assembly, homotetramer. Mg(2+) is required as a cofactor.

It localises to the cytoplasm. It carries out the reaction beta-D-fructose 1,6-bisphosphate + H2O = beta-D-fructose 6-phosphate + phosphate. It participates in carbohydrate biosynthesis; gluconeogenesis. This Yersinia pestis bv. Antiqua (strain Antiqua) protein is Fructose-1,6-bisphosphatase class 1.